The following is a 301-amino-acid chain: MHIAIMSRNKNLYSTRRLKEAAIARGHDVKVVDHISCYMNINMTSPSIHMKGVELPKFDAVIPRIGASVTFYGTAVLRQFEMMGVHPLNESVAITRSRDKLRSLQLLSRKSIGLPVTGFANKPSDVPDLLDMVGGAPCVIKLLEGTQGIGVVLAETRKAAESVIEAFMGLKANIMVQEYIKEAGGADIRCFVIGDKVIAAMKRQALPGEFRSNLHRGGSATIVKLTPEERSTALRAAKTMGLNVAGVDILRSKHGPLVMEVNSSPGLEGIEKATGIDVADKIIQFIEKNVKATSTKTKGVG.

The ATP-grasp domain maps to 104–287 (LQLLSRKSIG…VADKIIQFIE (184 aa)). ATP contacts are provided by residues lysine 141, 178-179 (EY), aspartate 187, and 211-213 (RSN). Residues aspartate 248, glutamate 260, and asparagine 262 each contribute to the Mg(2+) site. Mn(2+) contacts are provided by aspartate 248, glutamate 260, and asparagine 262.

It belongs to the RimK family. It depends on Mg(2+) as a cofactor. Requires Mn(2+) as cofactor.

This is Probable alpha-L-glutamate ligase 2 from Shewanella denitrificans (strain OS217 / ATCC BAA-1090 / DSM 15013).